The primary structure comprises 140 residues: HTH-type transcriptional regulator YfmP (140 aa).

The region spanning 1 to 73 (MEWMKIDQVA…LQELQHFMET (73 aa)) is the HTH merR-type domain. The segment at residues 6–25 (IDQVAKRSGLTKRTIRFYEE) is a DNA-binding region (H-T-H motif).

Functionally, repressor of the yfmOP operon. A mutation in yfmP leads to overexpression of yfmO, probably causing a decrease in cellular copper that is eventually responsible for a reduced copper induction of copZA. This Bacillus subtilis (strain 168) protein is HTH-type transcriptional regulator YfmP (yfmP).